A 495-amino-acid chain; its full sequence is COP9 signalosome complex subunit 2 (495 aa).

A disordered region spans residues 1-26 (MGDEYMDDDEDYGFEYEDDSGSEPDV). Residues 254 to 416 (AHTDFFEAFK…GMIEMPKNKK (163 aa)) form the PCI domain. A disordered region spans residues 426 to 468 (PNAGDQGTTKSDSKPGTSSEPSTTTSVTSSILQGPPATSSCHQ). Residues 430-441 (DQGTTKSDSKPG) show a composition bias toward polar residues. Over residues 442 to 455 (TSSEPSTTTSVTSS) the composition is skewed to low complexity.

Belongs to the CSN2 family. Component of the CSN complex, probably composed of csn-1, csn-2, csn-3, csn-4, csn-5, csn-6 and csn-7. Within the complex it probably interacts directly with csn-1, csn-3 and csn-4.

The protein resides in the cytoplasm. The protein localises to the nucleus. In terms of biological role, essential component of the COP9 signalosome complex (CSN), a complex involved in various cellular and developmental processes. The CSN complex is an essential regulator of the ubiquitin (Ubl) conjugation pathway by mediating the deneddylation of the cullin subunits of the SCF-type E3 ligase complexes, leading to decrease the Ubl ligase activity of SCF. The CSN complex plays an essential role in embryogenesis and oogenesis and is required to regulate microtubule stability in the early embryo. Mediates mei-3/katanin targeting for degradation at the meiosis to mitosis transition via deneddylation of cul-3. In Caenorhabditis elegans, this protein is COP9 signalosome complex subunit 2 (csn-2).